Here is a 217-residue protein sequence, read N- to C-terminus: MSIGILGKKLGMSQLFDEKGNSVPVTLIEAGPCRITQLKTTALDGYTAVQIGYGLSKDKHISKPEKGHLLKSGEELLKHLKEYRVEETSSYEIGNQITVKNFEVGQKVDISGKSMGRGFAGYQKRHGFSRGPMSHGSKNHRAPGSTGAGTTPGRIYPGKRMAGRYGGKQITTKGLLVLKIDDQKNLLVVKGSVPGKPGSIINIKPNNIVGKKGGEKS.

The interval 127 to 162 is disordered; it reads GFSRGPMSHGSKNHRAPGSTGAGTTPGRIYPGKRMA. Low complexity predominate over residues 142–153; it reads APGSTGAGTTPG.

This sequence belongs to the universal ribosomal protein uL3 family. Part of the 50S ribosomal subunit. Forms a cluster with proteins L14 and L19.

One of the primary rRNA binding proteins, it binds directly near the 3'-end of the 23S rRNA, where it nucleates assembly of the 50S subunit. This is Large ribosomal subunit protein uL3 from Prochlorococcus marinus (strain MIT 9301).